The following is a 217-amino-acid chain: Probable transaldolase (217 aa).

The active-site Schiff-base intermediate with substrate is the K83.

The protein belongs to the transaldolase family. Type 3B subfamily.

The protein localises to the cytoplasm. The enzyme catalyses D-sedoheptulose 7-phosphate + D-glyceraldehyde 3-phosphate = D-erythrose 4-phosphate + beta-D-fructose 6-phosphate. Its pathway is carbohydrate degradation; pentose phosphate pathway; D-glyceraldehyde 3-phosphate and beta-D-fructose 6-phosphate from D-ribose 5-phosphate and D-xylulose 5-phosphate (non-oxidative stage): step 2/3. Its function is as follows. Transaldolase is important for the balance of metabolites in the pentose-phosphate pathway. The chain is Probable transaldolase from Coprothermobacter proteolyticus (strain ATCC 35245 / DSM 5265 / OCM 4 / BT).